Reading from the N-terminus, the 84-residue chain is Carboxysome shell vertex protein CsoS4B (84 aa).

Residues 1-77 (MQILQVKKQL…TDLTVGGIID (77 aa)) enclose the BMV domain.

This sequence belongs to the CcmL/EutN family. CsoS4 subfamily. Homopentamer.

The protein resides in the carboxysome. In terms of biological role, probably forms vertices in the carboxysome, a polyhedral inclusion where RuBisCO (ribulose bisphosphate carboxylase, cbbL-cbbS) is sequestered. Has been modeled to induce curvature upon insertion into an otherwise flat hexagonal layer of major carboxysome subunits. The polypeptide is Carboxysome shell vertex protein CsoS4B (Hydrogenovibrio crunogenus (strain DSM 25203 / XCL-2) (Thiomicrospira crunogena)).